The sequence spans 131 residues: Small ribosomal subunit protein eS8 (131 aa).

The disordered stretch occupies residues 1–42; sequence MKLGAYYKGGDLKKPSGGKKRKVRKTKKKALGGGPPQIPKLG. Positions 16–30 are enriched in basic residues; the sequence is SGGKKRKVRKTKKKA.

Belongs to the eukaryotic ribosomal protein eS8 family. In terms of assembly, part of the 30S ribosomal subunit.

The sequence is that of Small ribosomal subunit protein eS8 from Pyrobaculum aerophilum (strain ATCC 51768 / DSM 7523 / JCM 9630 / CIP 104966 / NBRC 100827 / IM2).